We begin with the raw amino-acid sequence, 191 residues long: Small ribosomal subunit protein uS4A (191 aa).

Ser50 and Ser161 each carry phosphoserine. Positions 107–181 (RRLQTQVFKL…CKRKRLRSQE (75 aa)) constitute an S4 RNA-binding domain. Tyr164 bears the Phosphotyrosine mark. The tract at residues 166–191 (GGRPGRCKRKRLRSQEGGEGEEAEEE) is disordered. Position 179 is a phosphoserine (Ser179).

Belongs to the universal ribosomal protein uS4 family. Component of the small ribosomal subunit (SSU). Mature yeast ribosomes consist of a small (40S) and a large (60S) subunit. The 40S small subunit contains 1 molecule of ribosomal RNA (18S rRNA) and at least 33 different proteins. The large 60S subunit contains 3 rRNA molecules (25S, 5.8S and 5S rRNA) and at least 46 different proteins. Interacts with snoRNA U3. uS11 interacts with MPP10. Component of the ribosomal small subunit (SSU) processome composed of at least 40 protein subunits and snoRNA U3.

The protein localises to the cytoplasm. Its function is as follows. Component of the ribosome, a large ribonucleoprotein complex responsible for the synthesis of proteins in the cell. The small ribosomal subunit (SSU) binds messenger RNAs (mRNAs) and translates the encoded message by selecting cognate aminoacyl-transfer RNA (tRNA) molecules. The large subunit (LSU) contains the ribosomal catalytic site termed the peptidyl transferase center (PTC), which catalyzes the formation of peptide bonds, thereby polymerizing the amino acids delivered by tRNAs into a polypeptide chain. The nascent polypeptides leave the ribosome through a tunnel in the LSU and interact with protein factors that function in enzymatic processing, targeting, and the membrane insertion of nascent chains at the exit of the ribosomal tunnel. uS4 is involved in nucleolar processing of pre-18S ribosomal RNA and ribosome assembly. The sequence is that of Small ribosomal subunit protein uS4A (rps901) from Schizosaccharomyces pombe (strain 972 / ATCC 24843) (Fission yeast).